We begin with the raw amino-acid sequence, 204 residues long: dITP/XTP pyrophosphatase (204 aa).

Position 11–16 (11–16 (SRNRKK)) interacts with substrate. Asp-76 (proton acceptor) is an active-site residue. Asp-76 is a binding site for Mg(2+). Substrate contacts are provided by residues Ser-77, 158–161 (FGYD), Lys-181, and 186–187 (HR).

The protein belongs to the HAM1 NTPase family. In terms of assembly, homodimer. Mg(2+) serves as cofactor.

It carries out the reaction XTP + H2O = XMP + diphosphate + H(+). The catalysed reaction is dITP + H2O = dIMP + diphosphate + H(+). It catalyses the reaction ITP + H2O = IMP + diphosphate + H(+). In terms of biological role, pyrophosphatase that catalyzes the hydrolysis of nucleoside triphosphates to their monophosphate derivatives, with a high preference for the non-canonical purine nucleotides XTP (xanthosine triphosphate), dITP (deoxyinosine triphosphate) and ITP. Seems to function as a house-cleaning enzyme that removes non-canonical purine nucleotides from the nucleotide pool, thus preventing their incorporation into DNA/RNA and avoiding chromosomal lesions. The chain is dITP/XTP pyrophosphatase from Mycobacterium tuberculosis (strain CDC 1551 / Oshkosh).